Consider the following 427-residue polypeptide: CD209 antigen (427 aa).

The Cytoplasmic segment spans residues 1–37 (MSDSKEPRLQQLGLLEEEQLRGLGFRQTRGYKSLAGC). 3 short sequence motifs (endocytosis signal) span residues 14–15 (LL), 16–18 (EEE), and 31–34 (YKSL). A helical; Signal-anchor for type II membrane protein transmembrane segment spans residues 38–58 (LGHGPLVLQLLSFTLLAALLV). Residues 59 to 427 (QVSKVPSSIS…ASATPNPPPE (369 aa)) are Extracellular-facing. N80 carries N-linked (GlcNAc...) asparagine glycosylation. Tandem repeats lie at residues 96-118 (KLQE…PEKS), 119-141 (KQQE…PEKS), 142-164 (KQQE…PEKS), 165-187 (KQQE…PEKS), 188-210 (KQQE…PEKS), 211-233 (KQQE…PEKS), 234-256 (KQQE…PEKS), and 257-280 (KQQE…RRCP). The interval 96-280 (KLQEIYQELT…AVERLCRRCP (185 aa)) is 8 X approximate tandem repeats. 3 disulfides stabilise this stretch: C279–C290, C307–C400, and C379–C392. The 116-residue stretch at 286–401 (FQGNCYFMSN…CNLAKFWICK (116 aa)) folds into the C-type lectin domain. Positions 370, 372, 374, 377, 388, and 389 each coordinate Ca(2+).

Homotetramer. Interacts with C1QBP; the interaction is indicative for a C1q:C1QBP:CD209 signaling complex. Interacts with ICAM2 and ICAM3 by binding to mannose-like carbohydrates. Interacts (via C-type lectin domain) with CEACAM1 (via Lewis X moieties); this interaction is regulated by the glycosylation pattern of CEACAM1 on cell types and regulates contact between dendritic cells and neutrophils.

The protein localises to the membrane. Its function is as follows. Pathogen-recognition receptor expressed on the surface of immature dendritic cells (DCs) and involved in initiation of primary immune response. Thought to mediate the endocytosis of pathogens which are subsequently degraded in lysosomal compartments. The receptor returns to the cell membrane surface and the pathogen-derived antigens are presented to resting T-cells via MHC class II proteins to initiate the adaptive immune response. Probably recognizes in a calcium-dependent manner high mannose N-linked oligosaccharides in a variety of pathogen antigens. Functionally, on DCs it is a high affinity receptor for ICAM2 and ICAM3 by binding to mannose-like carbohydrates. May act as a DC rolling receptor that mediates transendothelial migration of DC presursors from blood to tissues by binding endothelial ICAM2. Seems to regulate DC-induced T-cell proliferation by binding to ICAM3 on T-cells in the immunological synapse formed between DC and T-cells. The protein is CD209 antigen (CD209) of Gorilla gorilla gorilla (Western lowland gorilla).